A 228-amino-acid polypeptide reads, in one-letter code: Ribose-5-phosphate isomerase A (228 aa).

Substrate-binding positions include 27-30 (TGTT), 86-89 (DGAD), and 100-103 (KGGG). Residue E109 is the Proton acceptor of the active site. K127 serves as a coordination point for substrate.

Belongs to the ribose 5-phosphate isomerase family. Homodimer.

The catalysed reaction is aldehydo-D-ribose 5-phosphate = D-ribulose 5-phosphate. It functions in the pathway carbohydrate degradation; pentose phosphate pathway; D-ribose 5-phosphate from D-ribulose 5-phosphate (non-oxidative stage): step 1/1. Its function is as follows. Catalyzes the reversible conversion of ribose-5-phosphate to ribulose 5-phosphate. The sequence is that of Ribose-5-phosphate isomerase A from Borrelia hermsii (strain HS1 / DAH).